The following is a 67-amino-acid chain: Protein AaeX (67 aa).

2 consecutive transmembrane segments (helical) span residues 3-23 (LFPV…ELLL) and 43-63 (FVWH…YLLS).

This sequence belongs to the AaeX family.

It is found in the cell membrane. In Cronobacter sakazakii (strain ATCC BAA-894) (Enterobacter sakazakii), this protein is Protein AaeX.